The primary structure comprises 311 residues: ADP-ribosyl cyclase/cyclic ADP-ribose hydrolase 2 (311 aa).

A signal peptide spans 1–24; that stretch reads MAVQGGLLSLWLWLWLSLLTVLLG. Disulfide bonds link Cys-46–Cys-60, Cys-76–Cys-156, and Cys-137–Cys-150. N-linked (GlcNAc...) asparagine glycans are attached at residues Asn-59 and Asn-88. Trp-102 is a binding site for NAD(+). Trp-102 contacts nicotinamide. Asn-141 carries N-linked (GlcNAc...) asparagine glycosylation. Trp-165 serves as a coordination point for NAD(+). Asn-185 is a glycosylation site (N-linked (GlcNAc...) asparagine). NAD(+) is bound at residue Glu-203. Cystine bridges form between Cys-231-Cys-252 and Cys-264-Cys-273. Ser-286 carries the GPI-anchor amidated serine lipid modification. Residues 287 to 311 constitute a propeptide that is removed on maturation; sequence ASLHAIGDASLLISLLVALASSSQA.

It belongs to the ADP-ribosyl cyclase family. Homodimer. In terms of tissue distribution, expressed in the bone marrow, spleen and thymus in lymphoid organs, and the lung, kidney and heart in non-lymphoid organs.

The protein resides in the cell membrane. It catalyses the reaction NAD(+) + H2O = ADP-D-ribose + nicotinamide + H(+). It carries out the reaction NAD(+) = cyclic ADP-beta-D-ribose + nicotinamide + H(+). The enzyme catalyses cyclic ADP-beta-D-ribose + H2O = ADP-D-ribose. In terms of biological role, catalyzes both the synthesis of cyclic ADP-beta-D-ribose (cADPR) from NAD(+), and its hydrolysis to ADP-D-ribose (ADPR). Cyclic ADPR is known to serve as an endogenous second messenger that elicits calcium release from intracellular stores, and thus regulates the mobilization of intracellular calcium. May be involved in pre-B-cell growth. The protein is ADP-ribosyl cyclase/cyclic ADP-ribose hydrolase 2 (Bst1) of Mus musculus (Mouse).